Consider the following 471-residue polypeptide: Glutamate--tRNA ligase (471 aa).

The 'HIGH' region signature appears at 10–20 (PSPTGYLHIGG). 4 residues coordinate Zn(2+): Cys107, Cys109, Cys134, and Glu136. A 'KMSKS' region motif is present at residues 244–248 (RLSKR). Lys247 contributes to the ATP binding site.

Belongs to the class-I aminoacyl-tRNA synthetase family. Glutamate--tRNA ligase type 1 subfamily. In terms of assembly, monomer. The cofactor is Zn(2+).

The protein localises to the cytoplasm. The catalysed reaction is tRNA(Glu) + L-glutamate + ATP = L-glutamyl-tRNA(Glu) + AMP + diphosphate. Catalyzes the attachment of glutamate to tRNA(Glu) in a two-step reaction: glutamate is first activated by ATP to form Glu-AMP and then transferred to the acceptor end of tRNA(Glu). This chain is Glutamate--tRNA ligase, found in Anaeromyxobacter sp. (strain Fw109-5).